The following is a 525-amino-acid chain: uncharacterized protein (525 aa).

Residue Ser55 is modified to Phosphoserine. A run of 13 helical transmembrane segments spans residues 81–101 (AYIV…PNFY), 120–140 (LLGQ…LGPL), 147–167 (KLVY…CALA), 173–193 (LVIS…NVAG), 208–228 (MYMF…GTGV), 238–258 (WLYW…VFTP), 295–315 (FVFF…SLGI), 318–338 (GFVN…YFSI), 350–370 (YMAA…QCWL), 388–408 (FIMT…FAFC), 413–433 (IHYI…YHIW), 454–474 (AFEL…ALMF), and 484–504 (AVVG…YFYG).

The protein belongs to the major facilitator superfamily. CAR1 family.

Its subcellular location is the membrane. This is an uncharacterized protein from Schizosaccharomyces pombe (strain 972 / ATCC 24843) (Fission yeast).